The sequence spans 533 residues: Cytochrome P450 monooxygenase ltmK (533 aa).

Residues 27-47 (VHWLQVIVALLVLIVCIFLYW) form a helical membrane-spanning segment. An N-linked (GlcNAc...) asparagine glycan is attached at Asn116. Heme is bound at residue Cys473. N-linked (GlcNAc...) asparagine glycosylation occurs at Asn528.

This sequence belongs to the cytochrome P450 family. Requires heme as cofactor.

It localises to the membrane. Its pathway is secondary metabolite biosynthesis. Functionally, cytochrome P450 monooxygenase; part of the gene clusters that mediates the biosynthesis of lolitrems, indole-diterpene mycotoxins that are potent tremorgens in mammals, and are synthesized by clavicipitaceous fungal endophytes in association with their grass hosts. The geranylgeranyl diphosphate (GGPP) synthase ltmG is proposed to catalyze the first step in lolitrem biosynthesis. LtmG catalyzes a series of iterative condensations of isopentenyl diphosphate (IPP) with dimethylallyl diphosphate (DMAPP), geranyl diphosphate (GPP), and farnesyl diphosphate (FPP), to form GGPP. GGPP then condenses with indole-3-glycerol phosphate to form 3-geranylgeranylindole, an acyclic intermediate, to be incorporated into paxilline. Either ltmG or ltmC could be responsible for this step, as both are putative prenyl transferases. The FAD-dependent monooxygenase ltmM then catalyzes the epoxidation of the two terminal alkenes of the geranylgeranyl moiety, which is subsequently cyclized by ltmB, to paspaline. The cytochrome P450 monooxygenases ltmQ and ltmP can sequentially oxidize paspaline to terpendole E and terpendole F. Alternatively, ltmP converts paspaline to an intermediate which is oxidized by ltmQ to terpendole F. LtmF, ltmK, ltmE and ltmJ appear to be unique to the epichloe endophytes. The prenyltransferase ltmF is involved in the 27-hydroxyl-O-prenylation. The cytochrome P450 monooxygenase ltmK is required for the oxidative acetal ring formation. The multi-functional prenyltransferase ltmE is required for C20- and C21-prenylations of the indole ring of paspalanes and acts together with the cytochrome P450 monooxygenase ltmJ to yield lolitremanes by multiple oxidations and ring closures. The stereoisomer pairs of lolitriol and lolitrem N or lolitrem B and lolitrem F may be attributed to variations in the way in which ring closure can occur under the action of ltmJ. While the major product of this pathway is lolitrem B, the prenyl transferases and cytochrome P450 monooxygenases identified in this pathway have a remarkable versatility in their regio- and stereo-specificities to generate a diverse range of metabolites that are products of a metabolic grid rather than a linear pathway. The polypeptide is Cytochrome P450 monooxygenase ltmK (Epichloe festucae var. lolii (Neotyphodium lolii)).